A 447-amino-acid chain; its full sequence is GTPase Der (447 aa).

EngA-type G domains follow at residues 3 to 167 (PVIA…QLPE) and 180 to 353 (IRLA…KAAT). GTP-binding positions include 9 to 16 (GRPNVGKS), 56 to 60 (DTGGF), 119 to 122 (NKAE), 186 to 193 (GRPNVGKS), 233 to 237 (DTAGL), and 298 to 301 (NKWD). Residues 353 to 438 (TCKMPTPVLT…PLRIEMKTSR (86 aa)) enclose the KH-like domain.

Belongs to the TRAFAC class TrmE-Era-EngA-EngB-Septin-like GTPase superfamily. EngA (Der) GTPase family. In terms of assembly, associates with the 50S ribosomal subunit.

Its function is as follows. GTPase that plays an essential role in the late steps of ribosome biogenesis. The polypeptide is GTPase Der (Paracidovorax citrulli (strain AAC00-1) (Acidovorax citrulli)).